The following is a 377-amino-acid chain: N-acetyldiaminopimelate deacetylase (377 aa).

D69 is an active-site residue. Residue E128 is the Proton acceptor of the active site.

The protein belongs to the peptidase M20A family. N-acetyldiaminopimelate deacetylase subfamily.

The catalysed reaction is N-acetyl-(2S,6S)-2,6-diaminopimelate + H2O = (2S,6S)-2,6-diaminopimelate + acetate. It functions in the pathway amino-acid biosynthesis; L-lysine biosynthesis via DAP pathway; LL-2,6-diaminopimelate from (S)-tetrahydrodipicolinate (acetylase route): step 3/3. Catalyzes the conversion of N-acetyl-diaminopimelate to diaminopimelate and acetate. In Brevibacillus brevis (strain 47 / JCM 6285 / NBRC 100599), this protein is N-acetyldiaminopimelate deacetylase.